The following is a 382-amino-acid chain: Lipid-A-disaccharide synthase (382 aa).

It belongs to the LpxB family.

It carries out the reaction 2-N,3-O-bis[(3R)-3-hydroxytetradecanoyl]-alpha-D-glucosaminyl 1-phosphate + UDP-2-N,3-O-bis[(3R)-3-hydroxytetradecanoyl]-alpha-D-glucosamine = lipid A disaccharide (E. coli) + UDP + H(+). The catalysed reaction is a lipid X + a UDP-2-N,3-O-bis[(3R)-3-hydroxyacyl]-alpha-D-glucosamine = a lipid A disaccharide + UDP + H(+). Its pathway is glycolipid biosynthesis; lipid IV(A) biosynthesis; lipid IV(A) from (3R)-3-hydroxytetradecanoyl-[acyl-carrier-protein] and UDP-N-acetyl-alpha-D-glucosamine: step 5/6. Functionally, condensation of UDP-2,3-diacylglucosamine and 2,3-diacylglucosamine-1-phosphate to form lipid A disaccharide, a precursor of lipid A, a phosphorylated glycolipid that anchors the lipopolysaccharide to the outer membrane of the cell. The sequence is that of Lipid-A-disaccharide synthase from Enterobacter sp. (strain 638).